A 304-amino-acid polypeptide reads, in one-letter code: Protoheme IX farnesyltransferase 1 (304 aa).

8 helical membrane-spanning segments follow: residues 24-44 (VVVL…KAPL), 47-67 (FVPW…AGAA), 99-119 (MALG…LAFT), 122-142 (LTAW…TGFL), 150-170 (IVIG…AITG), 176-196 (PLLL…ALCI), 228-248 (LVLF…LVYL), and 280-300 (YSIV…YLPL).

This sequence belongs to the UbiA prenyltransferase family. Protoheme IX farnesyltransferase subfamily.

It is found in the cell inner membrane. It catalyses the reaction heme b + (2E,6E)-farnesyl diphosphate + H2O = Fe(II)-heme o + diphosphate. The protein operates within porphyrin-containing compound metabolism; heme O biosynthesis; heme O from protoheme: step 1/1. Functionally, converts heme B (protoheme IX) to heme O by substitution of the vinyl group on carbon 2 of heme B porphyrin ring with a hydroxyethyl farnesyl side group. The polypeptide is Protoheme IX farnesyltransferase 1 (Pseudomonas aeruginosa (strain UCBPP-PA14)).